The chain runs to 246 residues: Ribonuclease PH (246 aa).

Phosphate is bound by residues Arg-91 and 129-131; that span reads GTR.

It belongs to the RNase PH family. Homohexameric ring arranged as a trimer of dimers.

It catalyses the reaction tRNA(n+1) + phosphate = tRNA(n) + a ribonucleoside 5'-diphosphate. Functionally, phosphorolytic 3'-5' exoribonuclease that plays an important role in tRNA 3'-end maturation. Removes nucleotide residues following the 3'-CCA terminus of tRNAs; can also add nucleotides to the ends of RNA molecules by using nucleoside diphosphates as substrates, but this may not be physiologically important. Probably plays a role in initiation of 16S rRNA degradation (leading to ribosome degradation) during starvation. The protein is Ribonuclease PH of Burkholderia ambifaria (strain MC40-6).